The following is a 236-amino-acid chain: Small ribosomal subunit protein uS2c (236 aa).

It belongs to the universal ribosomal protein uS2 family.

The protein resides in the plastid. Its subcellular location is the chloroplast. The sequence is that of Small ribosomal subunit protein uS2c (rps2) from Oryza nivara (Indian wild rice).